The primary structure comprises 638 residues: uncharacterized protein (638 aa).

A signal peptide spans 1–31 (MKFIKFNDSTIDSFLFMMLTDLAKTLTKSEA). Composition is skewed to basic and acidic residues over residues 247–256 (EEKKAPKLSD), 273–284 (EEMPTWHRETEA), 301–310 (DLGKDASREG), and 329–342 (RKDY…ESQK). Disordered regions lie at residues 247 to 285 (EEKK…TEAP) and 301 to 354 (DLGK…ADGK). The VWFA domain maps to 445 to 632 (FTLLVDCSAS…DVLYPLLKKL (188 aa)).

This is an uncharacterized protein from Bacillus subtilis (strain 168).